Reading from the N-terminus, the 493-residue chain is Ribulose bisphosphate carboxylase large chain (493 aa).

2 residues coordinate substrate: asparagine 132 and threonine 182. The active-site Proton acceptor is lysine 184. Lysine 186 serves as a coordination point for substrate. Lysine 210, aspartate 212, and glutamate 213 together coordinate Mg(2+). Lysine 210 is modified (N6-carboxylysine). The Proton acceptor role is filled by histidine 302. Arginine 303, histidine 335, and serine 387 together coordinate substrate.

It belongs to the RuBisCO large chain family. Type I subfamily. Heterohexadecamer of 8 large chains and 8 small chains. Mg(2+) serves as cofactor.

The enzyme catalyses 2 (2R)-3-phosphoglycerate + 2 H(+) = D-ribulose 1,5-bisphosphate + CO2 + H2O. It catalyses the reaction D-ribulose 1,5-bisphosphate + O2 = 2-phosphoglycolate + (2R)-3-phosphoglycerate + 2 H(+). Its function is as follows. RuBisCO catalyzes two reactions: the carboxylation of D-ribulose 1,5-bisphosphate, the primary event in carbon dioxide fixation, as well as the oxidative fragmentation of the pentose substrate. Both reactions occur simultaneously and in competition at the same active site. This chain is Ribulose bisphosphate carboxylase large chain, found in Acidiphilium cryptum (strain JF-5).